The primary structure comprises 247 residues: Cytochrome c oxidase subunit 2 (247 aa).

Topologically, residues 1 to 38 (MKEMMMSNMFNDVPTPWAMFFQDSATPNMEGMLELHNN) are mitochondrial intermembrane. A helical transmembrane segment spans residues 39–58 (VVFYLCMMLGFVTFMLYNML). The Mitochondrial matrix segment spans residues 59 to 78 (TTYNKSVMPYKYLNQGQFME). The chain crosses the membrane as a helical span at residues 79-103 (MMWTTLPAVMLLMIAFPSFILLYMC). Residues 104 to 247 (DEVMAPAMTI…ADFLAWIDEQ (144 aa)) lie on the Mitochondrial intermembrane side of the membrane. Cu cation is bound by residues H182, C217, E219, C221, H225, and M228. E219 is a Mg(2+) binding site.

Belongs to the cytochrome c oxidase subunit 2 family. In terms of assembly, component of the cytochrome c oxidase (complex IV, CIV), a multisubunit enzyme composed of a catalytic core of 3 subunits and several supernumerary subunits. The complex exists as a monomer or a dimer and forms supercomplexes (SCs) in the inner mitochondrial membrane with ubiquinol-cytochrome c oxidoreductase (cytochrome b-c1 complex, complex III, CIII). Cu cation is required as a cofactor.

The protein resides in the mitochondrion inner membrane. The enzyme catalyses 4 Fe(II)-[cytochrome c] + O2 + 8 H(+)(in) = 4 Fe(III)-[cytochrome c] + 2 H2O + 4 H(+)(out). In terms of biological role, component of the cytochrome c oxidase, the last enzyme in the mitochondrial electron transport chain which drives oxidative phosphorylation. The respiratory chain contains 3 multisubunit complexes succinate dehydrogenase (complex II, CII), ubiquinol-cytochrome c oxidoreductase (cytochrome b-c1 complex, complex III, CIII) and cytochrome c oxidase (complex IV, CIV), that cooperate to transfer electrons derived from NADH and succinate to molecular oxygen, creating an electrochemical gradient over the inner membrane that drives transmembrane transport and the ATP synthase. Cytochrome c oxidase is the component of the respiratory chain that catalyzes the reduction of oxygen to water. Electrons originating from reduced cytochrome c in the intermembrane space (IMS) are transferred via the dinuclear copper A center (CU(A)) of subunit 2 and heme A of subunit 1 to the active site in subunit 1, a binuclear center (BNC) formed by heme A3 and copper B (CU(B)). The BNC reduces molecular oxygen to 2 water molecules using 4 electrons from cytochrome c in the IMS and 4 protons from the mitochondrial matrix. This chain is Cytochrome c oxidase subunit 2 (COX2), found in Brettanomyces custersianus (Yeast).